A 362-amino-acid polypeptide reads, in one-letter code: Class I histocompatibility antigen, Gogo-B*0103 alpha chain (362 aa).

The signal sequence occupies residues 1 to 24 (MRVTAPRTLLLLLSAALALTETWA). Positions 25–114 (GSHSMRYFDT…ALRYYNQSEA (90 aa)) are alpha-1. Over 25–308 (GSHSMRYFDT…EPSSQSTIPI (284 aa)) the chain is Extracellular. Asn110 carries an N-linked (GlcNAc...) asparagine glycan. An alpha-2 region spans residues 115–206 (GSHTIQWMYG…ENGRETLQRA (92 aa)). Cystine bridges form between Cys125-Cys188 and Cys227-Cys283. The tract at residues 207 to 298 (DTPKTHVTHH…GLPKPLTLRW (92 aa)) is alpha-3. Residues 209 to 295 (PKTHVTHHPI…QHEGLPKPLT (87 aa)) enclose the Ig-like C1-type domain. Residues 299–308 (EPSSQSTIPI) form a connecting peptide region. Residues 309–332 (VGIVAGLAVLAVVVIGAVVTAVIC) traverse the membrane as a helical segment. The Cytoplasmic portion of the chain corresponds to 333 to 362 (RRKSSGGKGGSYSQAASSDSAQGSDVSLTA). Positions 335-362 (KSSGGKGGSYSQAASSDSAQGSDVSLTA) are disordered. A compositionally biased stretch (low complexity) spans 343–362 (SYSQAASSDSAQGSDVSLTA).

Belongs to the MHC class I family. In terms of assembly, heterodimer of an alpha chain and a beta chain (beta-2-microglobulin).

It localises to the membrane. Its function is as follows. Involved in the presentation of foreign antigens to the immune system. The polypeptide is Class I histocompatibility antigen, Gogo-B*0103 alpha chain (Gorilla gorilla gorilla (Western lowland gorilla)).